The chain runs to 508 residues: MGLPWYRVHTIVLNDPGRLLAVHIMHTALVAGWAGSMALYELAVFDPSDPVLDPMWRQGMFVIPFMTRLGIINSWGGWGITGGTITYPGIWSYEGVAGAHIVFSGLCFLAAIWHWVYWDLEIFTDERTGKPSLDLPKIFGIHLFLAGVACFGFGAFHVTGLYGPGIWVSDPYGLTGKVQYVNPAWGVEGFDPFVPGGIASHHIAAGTLGILAGLFHLSVRPPQRLYKGLRMGNIETVLSSSIAAVFFAAFVVAGTMWYGSATTPIELFGPTRYQWDQGYFQQEIYRRVSTGLAKNQSLSEAWSKIPEKLAFYDYIGNNPAKGGLFRAGSMDNGDGIAVGWLGHPIFRDKEGRELFVRRMPTFFETFPVVLVDGAGIVRADVPFRRAESKYSVEQVGVTVEFYGGELNGVSYNDPATVKKYARRAQLGEIFELDRATLKSDGVFRSSPRGWFTFGHASFALLFFFGHIWHGARTLFRDVFAGIDPDLDAQVEFGAFQKLGDPTTRRQVV.

A run of 6 helical transmembrane segments spans residues 21 to 36, 101 to 115, 140 to 156, 203 to 218, 237 to 252, and 457 to 472; these read AVHIMHTALVAGWAGS, IVFSGLCFLAAIWHW, GIHLFLAGVACFGFGAF, IAAGTLGILAGLFHLS, VLSSSIAAVFFAAFVV, and SFALLFFFGHIWHGAR.

Belongs to the PsbB/PsbC family. PsbB subfamily. PSII is composed of 1 copy each of membrane proteins PsbA, PsbB, PsbC, PsbD, PsbE, PsbF, PsbH, PsbI, PsbJ, PsbK, PsbL, PsbM, PsbT, PsbX, PsbY, PsbZ, Psb30/Ycf12, at least 3 peripheral proteins of the oxygen-evolving complex and a large number of cofactors. It forms dimeric complexes. Requires Binds multiple chlorophylls. PSII binds additional chlorophylls, carotenoids and specific lipids. as cofactor.

It is found in the plastid. It localises to the chloroplast thylakoid membrane. One of the components of the core complex of photosystem II (PSII). It binds chlorophyll and helps catalyze the primary light-induced photochemical processes of PSII. PSII is a light-driven water:plastoquinone oxidoreductase, using light energy to abstract electrons from H(2)O, generating O(2) and a proton gradient subsequently used for ATP formation. This chain is Photosystem II CP47 reaction center protein, found in Trachelium caeruleum (Blue throatwort).